A 475-amino-acid polypeptide reads, in one-letter code: UDP-N-acetylmuramate--L-alanine ligase (475 aa).

Position 125–131 (125–131) interacts with ATP; it reads GTHGKTT.

Belongs to the MurCDEF family.

Its subcellular location is the cytoplasm. It carries out the reaction UDP-N-acetyl-alpha-D-muramate + L-alanine + ATP = UDP-N-acetyl-alpha-D-muramoyl-L-alanine + ADP + phosphate + H(+). The protein operates within cell wall biogenesis; peptidoglycan biosynthesis. Cell wall formation. This chain is UDP-N-acetylmuramate--L-alanine ligase, found in Haemophilus influenzae (strain PittGG).